The sequence spans 290 residues: MPDSLSFQALILKLHDYWSQQGCVILQPYDMEMGAGTFHPATSLKALGPNPWKAAYVQPCRRPADGRYGENPNRLCHYYQYQVILKPSPDNIQALYLGSLEAIGIDLSRHDIRFVEDDWESPTLGAWGLGWEVWCDGMEVTQFTYFQQIGGFDCKPVSGEITYGLERLAMYIQGVDNVYDLRFNDAGVSYGDVFLENERQFSAYNFEAANTETLFRWFKEASQECKALLERDKPLPLPAYDQAIKASHIFNLLQSRGMISVTERQAYIGRVRELTKAVAAAWMAYNGWEA.

It belongs to the class-II aminoacyl-tRNA synthetase family. Tetramer of two alpha and two beta subunits.

The protein localises to the cytoplasm. The enzyme catalyses tRNA(Gly) + glycine + ATP = glycyl-tRNA(Gly) + AMP + diphosphate. The chain is Glycine--tRNA ligase alpha subunit from Zymomonas mobilis subsp. mobilis (strain ATCC 31821 / ZM4 / CP4).